The primary structure comprises 286 residues: Mitochondrial dicarboxylate carrier (286 aa).

3 Solcar repeats span residues 7-87, 100-187, and 196-279; these read SRWY…MRDY, SKVL…AKQL, and DNIF…LRKH. 3 consecutive transmembrane segments (helical) span residues 9 to 29, 62 to 81, and 102 to 122; these read WYFG…LDLL, GLSA…FAIY, and VLLG…ADLV. N6-acetyllysine is present on Lys-158. Helical transmembrane passes span 162 to 181, 202 to 222, and 254 to 274; these read GATM…LSCY, FLSS…LDVL, and GLVP…MFLE.

It belongs to the mitochondrial carrier (TC 2.A.29) family. As to expression, expressed most strongly in liver, then kidney, and at lower levels in heart and brain.

Its subcellular location is the mitochondrion inner membrane. It carries out the reaction (S)-malate(in) + phosphate(out) = (S)-malate(out) + phosphate(in). The catalysed reaction is malonate(out) + (S)-malate(in) = malonate(in) + (S)-malate(out). The enzyme catalyses (S)-malate(in) + succinate(out) = (S)-malate(out) + succinate(in). It catalyses the reaction (S)-malate(in) + sulfate(out) = (S)-malate(out) + sulfate(in). It carries out the reaction malonate(out) + phosphate(in) = malonate(in) + phosphate(out). The catalysed reaction is succinate(out) + phosphate(in) = succinate(in) + phosphate(out). The enzyme catalyses sulfate(out) + phosphate(in) = sulfate(in) + phosphate(out). It catalyses the reaction malonate(out) + succinate(in) = malonate(in) + succinate(out). Its function is as follows. Catalyzes the electroneutral exchange or flux of physiologically important metabolites such as dicarboxylates (malonate, malate, succinate), inorganic sulfur-containing anions, and phosphate, across mitochondrial inner membrane. Plays an important role in gluconeogenesis, fatty acid metabolism, urea synthesis, and sulfur metabolism, particularly in liver, by supplying the substrates for the different metabolic processes. Regulates fatty acid release from adipocytes, and contributes to systemic insulin sensitivity. The polypeptide is Mitochondrial dicarboxylate carrier (Rattus norvegicus (Rat)).